The primary structure comprises 177 residues: Nucleoside triphosphate/diphosphate phosphatase (177 aa).

Arg-23 functions as the Proton donor in the catalytic mechanism. Residues Asn-87, Asp-103, Asp-105, Asp-107, Asp-120, and Glu-123 each contribute to the Mg(2+) site.

Belongs to the Ntdp family. The cofactor is Mg(2+).

It carries out the reaction a ribonucleoside 5'-triphosphate + H2O = a ribonucleoside 5'-diphosphate + phosphate + H(+). The enzyme catalyses a ribonucleoside 5'-diphosphate + H2O = a ribonucleoside 5'-phosphate + phosphate + H(+). In terms of biological role, has nucleoside phosphatase activity towards nucleoside triphosphates and nucleoside diphosphates. This chain is Nucleoside triphosphate/diphosphate phosphatase, found in Streptococcus pneumoniae serotype 19F (strain G54).